The sequence spans 334 residues: Anthranilate phosphoribosyltransferase (334 aa).

Residues glycine 79, 82 to 83, serine 87, 89 to 92, 107 to 115, and serine 119 contribute to the 5-phospho-alpha-D-ribose 1-diphosphate site; these read GD, NIST, and KHGNRSISS. Glycine 79 is a binding site for anthranilate. Mg(2+) is bound at residue serine 91. Asparagine 110 contacts anthranilate. Arginine 165 contacts anthranilate. Residues aspartate 224 and glutamate 225 each coordinate Mg(2+).

The protein belongs to the anthranilate phosphoribosyltransferase family. Homodimer. Mg(2+) is required as a cofactor.

The catalysed reaction is N-(5-phospho-beta-D-ribosyl)anthranilate + diphosphate = 5-phospho-alpha-D-ribose 1-diphosphate + anthranilate. It functions in the pathway amino-acid biosynthesis; L-tryptophan biosynthesis; L-tryptophan from chorismate: step 2/5. In terms of biological role, catalyzes the transfer of the phosphoribosyl group of 5-phosphorylribose-1-pyrophosphate (PRPP) to anthranilate to yield N-(5'-phosphoribosyl)-anthranilate (PRA). In Streptococcus pneumoniae (strain 70585), this protein is Anthranilate phosphoribosyltransferase.